Here is a 357-residue protein sequence, read N- to C-terminus: Membrane-bound lytic murein transglycosylase C (357 aa).

Positions 1-16 are cleaved as a signal peptide; the sequence is MKKMLALLVIAPLLVS. Cys-17 carries N-palmitoyl cysteine lipidation. Cys-17 is lipidated: S-diacylglycerol cysteine.

This sequence belongs to the transglycosylase Slt family.

Its subcellular location is the cell outer membrane. The catalysed reaction is Exolytic cleavage of the (1-&gt;4)-beta-glycosidic linkage between N-acetylmuramic acid (MurNAc) and N-acetylglucosamine (GlcNAc) residues in peptidoglycan, from either the reducing or the non-reducing ends of the peptidoglycan chains, with concomitant formation of a 1,6-anhydrobond in the MurNAc residue.. Its function is as follows. Murein-degrading enzyme. May play a role in recycling of muropeptides during cell elongation and/or cell division. The sequence is that of Membrane-bound lytic murein transglycosylase C from Pectobacterium atrosepticum (strain SCRI 1043 / ATCC BAA-672) (Erwinia carotovora subsp. atroseptica).